A 352-amino-acid chain; its full sequence is Proton-activated chloride channel (352 aa).

The segment at 1–55 (MEAIRKELSRSYQELNEEAEPVAIDPEEAEDEEKEQEEAASAVAPDRDSDRSSPP) is disordered. Over 1 to 65 (MEAIRKELSR…VRFSRTCLKN (65 aa)) the chain is Cytoplasmic. Positions 15–38 (LNEEAEPVAIDPEEAEDEEKEQEE) are enriched in acidic residues. The helical transmembrane segment at 66-86 (FFSVLLILVYLLLMGVAVFLV) threads the bilayer. The Extracellular portion of the chain corresponds to 87-299 (YQTITDFRDK…KDPYIQEIQD (213 aa)). The chain crosses the membrane as a helical span at residues 300-320 (IITANPWSMIALLCSVFLVLF). Topologically, residues 321–352 (KAADFAKLSVKWMIKVRRRHLKKRARELNHIS) are cytoplasmic.

Belongs to the proton-activated chloride channel family.

The protein resides in the cell membrane. It carries out the reaction chloride(in) = chloride(out). Chloride channel gated by pH that facilitates the entry of chloride ions into cells upon exposure to extracellular acidic pH. The protein is Proton-activated chloride channel of Xenopus tropicalis (Western clawed frog).